The chain runs to 102 residues: Carboxysome shell protein CcmK3 (102 aa).

A BMC domain is found at 4–90 (AVGVIQTDGF…PPDNVETVMP (87 aa)).

This sequence belongs to the bacterial microcompartments protein family. CcmK subfamily. As to quaternary structure, interacts stably with CcmK4, forming heterohexamers that can make dodecamers. Heterohexamers have a 1:2 CcmK3:CcmK4 stoichiometry. Upon expression in E.coli forms oligomers that could be dimers or trimers, but never hexamers; bulky residues in the pore region probably preclude the formation of homohexamers.

The protein localises to the carboxysome. A probably non-essential, minor shell protein of the carboxysome, a polyhedral inclusion where RuBisCO (ribulose bisphosphate carboxylase, rbcL-rbcS) is sequestered. Hexamers form sheets that form the facets of the polyhedral carboxysome. In PCC 7418 there are several CcmK paralogs with presumably functional differences. This subunit probably only makes heterohexamers with CcmK4. Heterohexamers can also make dodecamers, formation depends on buffer conditions. The chain is Carboxysome shell protein CcmK3 from Halothece sp. (strain PCC 7418) (Synechococcus sp. (strain PCC 7418)).